Reading from the N-terminus, the 337-residue chain is Calcium-binding protein 39-like (337 aa).

This sequence belongs to the Mo25 family. In terms of assembly, component of a trimeric complex composed of STK11/LKB1, STRAD (STRADA or STRADB) and CAB39/MO25 (CAB39/MO25alpha or CAB39L/MO25beta): the complex tethers STK11/LKB1 in the cytoplasm and stimulates its catalytic activity.

In terms of biological role, component of a complex that binds and activates STK11/LKB1. In the complex, required to stabilize the interaction between CAB39/MO25 (CAB39/MO25alpha or CAB39L/MO25beta) and STK11/LKB1. In Homo sapiens (Human), this protein is Calcium-binding protein 39-like (CAB39L).